The chain runs to 522 residues: Transactivator/viroplasmin protein (522 aa).

Residues 111 to 126 (QGIQIPQKSEPNSSVA) are compositionally biased toward polar residues. Disordered regions lie at residues 111 to 133 (QGIQ…AESG) and 491 to 522 (SADS…KASG).

The protein belongs to the caulimoviridae viroplasmin family.

It localises to the host cytoplasm. Its function is as follows. Enhances the ribosomal termination-reinitiation event leading to the translation of major open reading frames on the polycistronic viral RNAs. In Arabidopsis thaliana (Mouse-ear cress), this protein is Transactivator/viroplasmin protein.